The primary structure comprises 123 residues: MMTLQEEKIQAPVFFKEYVKGRFILNIGEYNHPLILSATQVLEYQDKIDDIQSIKKSHLDLILATNPEIILIGTGEKQLLPPLEIINQIAKAGKSVDFMASDTACKTYNLLVNENRNVSCIII.

It localises to the cell membrane. This Francisella tularensis subsp. holarctica (strain LVS) protein is 13 kDa major membrane protein.